A 241-amino-acid polypeptide reads, in one-letter code: MRIEIKLLPLQDNPVIPFNYNYELYSQIVEKAGAIEPRIVKLLESPHGYWTFSRIIIRKREIIPEKGIKILSDDISLYISSSNKEIIKGIVEGIEKSPEFKIGDVGFLVADIKALKSKEIKNVNIFSTLSPIVVRTVKFEGDKLKHWDLYPHDELFLDRLRKVMLLRYHEVMGDLPEDKDFRIELIKFKPTRLIVKDSYIRGSLMVFRYYGSKEIAKFGYENGFGEKTNLGFGMVKIIEEQ.

Belongs to the CRISPR-associated protein Cas6/Cse3/CasE family. Binds crRNA.

Its function is as follows. CRISPR (clustered regularly interspaced short palindromic repeat), is an adaptive immune system that provides protection against mobile genetic elements (viruses, transposable elements and conjugative plasmids). CRISPR clusters contain sequences complementary to antecedent mobile elements and target invading nucleic acids. CRISPR clusters are transcribed and processed into CRISPR RNA (crRNA), also called psiRNA (prokaryotic silencing) in this organism (Potential). The protein is Putative CRISPR-associated endoribonuclease-like protein Cas6 (cas6b) of Pyrococcus furiosus (strain ATCC 43587 / DSM 3638 / JCM 8422 / Vc1).